The following is a 149-amino-acid chain: Large ribosomal subunit protein uL11 (149 aa).

The protein belongs to the universal ribosomal protein uL11 family. As to quaternary structure, part of the ribosomal stalk of the 50S ribosomal subunit. Interacts with L10 and the large rRNA to form the base of the stalk. L10 forms an elongated spine to which L12 dimers bind in a sequential fashion forming a multimeric L10(L12)X complex. Post-translationally, one or more lysine residues are methylated.

Its function is as follows. Forms part of the ribosomal stalk which helps the ribosome interact with GTP-bound translation factors. In Azorhizobium caulinodans (strain ATCC 43989 / DSM 5975 / JCM 20966 / LMG 6465 / NBRC 14845 / NCIMB 13405 / ORS 571), this protein is Large ribosomal subunit protein uL11.